The following is a 398-amino-acid chain: Serine/threonine-protein phosphatase 4 regulatory subunit 2-B (398 aa).

The segment at 138-398 is disordered; sequence SSEKNTSPSL…NAPEEPMEQD (261 aa). 3 stretches are compositionally biased toward polar residues: residues 139–149, 156–170, and 183–193; these read SEKNTSPSLNR, PSNS…NVNG, and TLSSPMNTNGL. The segment covering 197 to 211 has biased composition (basic and acidic residues); that stretch reads MENKESDLQQKEKSL. The segment covering 278–294 has biased composition (polar residues); sequence ASTSADKGKESCQTAQT. A compositionally biased stretch (low complexity) spans 338 to 366; the sequence is SESACSLNSEEPNSAAAAASTAGTDSSEG.

It belongs to the PPP4R2 family. Serine/threonine-protein phosphatase 4 (PP4) occurs in different assemblies of the catalytic and one or more regulatory subunits.

Its function is as follows. Regulatory subunit of serine/threonine-protein phosphatase 4 (PP4). In Xenopus laevis (African clawed frog), this protein is Serine/threonine-protein phosphatase 4 regulatory subunit 2-B (ppp4r2-b).